We begin with the raw amino-acid sequence, 390 residues long: ATP phosphoribosyltransferase regulatory subunit (390 aa).

It belongs to the class-II aminoacyl-tRNA synthetase family. HisZ subfamily. As to quaternary structure, heteromultimer composed of HisG and HisZ subunits.

It is found in the cytoplasm. It participates in amino-acid biosynthesis; L-histidine biosynthesis; L-histidine from 5-phospho-alpha-D-ribose 1-diphosphate: step 1/9. Required for the first step of histidine biosynthesis. May allow the feedback regulation of ATP phosphoribosyltransferase activity by histidine. The sequence is that of ATP phosphoribosyltransferase regulatory subunit from Bacillus velezensis (strain DSM 23117 / BGSC 10A6 / LMG 26770 / FZB42) (Bacillus amyloliquefaciens subsp. plantarum).